The following is a 405-amino-acid chain: MKHFPSKVLTTAILATFCSGALAATNDDDVKKAATVAIAAAYNNGQEINGFKAGETIYDIDEDGTITKKDATAADVEADDFKGLGLKKVVTNLTKTVNENKQNVDAKVKAAESEIEKLTTKLADTDAALADTDAALDATTNALNKLGENITTFAEETKTNIVKIDEKLEAVADTVDKHAEAFNDIADSLDETNTKADEAVKTANEAKQTAEETKQNVDAKVKAAETAAGKAEAAAGTANTAADKAEAVAAKVTDIKADIATNKDNIAKKANSADVYTREESDSKFVRIDGLNATTEKLDTRLASAEKSIADHDTRLNGLDKTVSDLRKETRQGLAEQAALSGLFQPYNVGRFNVTAAVGGYKSESAVAIGTGFRFTENFAAKAGVAVGTSSGSSAAYHVGVNYEW.

Positions 1–23 (MKHFPSKVLTTAILATFCSGALA) are cleaved as a signal peptide. The head domain stretch occupies residues 24–87 (ATNDDDVKKA…ADDFKGLGLK (64 aa)). Coiled-coil stretches lie at residues 87–170 (KKVV…KLEA) and 181–329 (AFND…LRKE). The tract at residues 88–350 (KVVTNLTKTV…SGLFQPYNVG (263 aa)) is coiled stalk domain. An outer membrane translocation of the passenger domain region spans residues 312–350 (HDTRLNGLDKTVSDLRKETRQGLAEQAALSGLFQPYNVG). The next 4 membrane-spanning stretches (beta stranded) occupy residues 350 to 360 (GRFNVTAAVGG), 364 to 375 (ESAVAIGTGFRF), 382 to 388 (KAGVAVG), and 394 to 405 (SAAYHVGVNYEW). Residues 351–405 (RFNVTAAVGGYKSESAVAIGTGFRFTENFAAKAGVAVGTSSGSSAAYHVGVNYEW) are translocator domain.

This sequence belongs to the autotransporter-2 (AT-2) (TC 1.B.40) family. In terms of assembly, the non-membrane anchored protein (residues 24-350) probably forms a homotrimer; it is assumed the mature protein forms trimers in situ. The mature protein without the membrane-targeting segment (residues 24-350) binds to human heat shock 90 beta protein (HSP90AB1) both in vitro and when incubated with human monocytes. A subsequent paper showed binding of the same fragment in epithelial cells to both HSP90AA1 and HSP90AB1; in vitro the interaction is stabilized by ADP and the Hsp90 inhibitor 17-AAG (17-N-allylamino-17-demethoxygeldanamycin), in vitro and in vivo both interactions are inhibited by ATP. Binds human oxidized low-density lipoprotein receptor 1 (LOX-1, OLR1) in protein microarrays, in solution and when LOX-1 is expressed on the cell surface. Binds via the head and the beginning of the coiled stalk (residues 24-170); binding can be abrogated by monoclonal antibodies against those specific regions of NadA. Other potential binding partners were identified but not characterized in the same study. Forms high molecular weight oligomers in whole cell extracts that are not disrupted by boiling in SDS buffer.

It is found in the cell outer membrane. Its subcellular location is the cell surface. Functionally, adheres to and induces bacterial uptake by human epithelial cells in a microfilament-dependent process. Binding is reduced by pronase treatment, suggesting there is a protein receptor on the human cells. Possible human protein receptors include integrin beta-1 (ITGB1) and oxidized low-density lipoprotein receptor 1 (OLR1). Binds to extracellular human Hsp90 (preferentially the beta isoform, HSP90AB1) on monocytes, binding stimulates monocytes in a TLR4-dependent fashion, polymixin B, which binds NadA, blocks the activation. Hsp90 is probably not the first receptor on human monocytes. Non-membrane anchored protein (residues 24-350) is internalized into human epithelial cells by hijacking the endosome recycling pathway and may be recycled back to the cell surface, which might aid transcellular trafficking of the bacteria. A bacterial cell surface protein; antisera against this protein induce complement-mediated killing of this and other strains. This chain is Neisseria adhesin A, found in Neisseria meningitidis serogroup B.